A 606-amino-acid polypeptide reads, in one-letter code: Kelch-like protein 41 (606 aa).

Serine 3 bears the Phosphoserine mark. In terms of domain architecture, BTB spans 33-100 (IDCTLKAGDK…LYSASIDLND (68 aa)). The region spanning 135 to 237 (CLAILRLGLL…TEKYFKDHVE (103 aa)) is the BACK domain. 5 Kelch repeats span residues 346–398 (QIYV…EVDD), 399–447 (KIYV…SHKG), 448–495 (MIYC…VHKG), 497–542 (IVIA…SLAG), and 544–599 (LYAI…TRLN).

In terms of assembly, interacts with NRAP. Interacts with LASP1. Part of a complex that contains CUL3, RBX1 and KLHL41. Ubiquitinated by E3 ubiquitin ligase complex formed by CUL3 and RBX1 and probably targeted for proteasome-independent degradation. Quinone-induced oxidative stress increases its ubiquitination. Sarcomeric muscle.

Its subcellular location is the cytoplasm. The protein resides in the cytoskeleton. The protein localises to the cell projection. It localises to the pseudopodium. It is found in the ruffle. Its subcellular location is the myofibril. The protein resides in the sarcomere. The protein localises to the m line. It localises to the sarcoplasmic reticulum membrane. It is found in the endoplasmic reticulum membrane. Involved in skeletal muscle development and differentiation. Regulates proliferation and differentiation of myoblasts and plays a role in myofibril assembly by promoting lateral fusion of adjacent thin fibrils into mature, wide myofibrils. Required for pseudopod elongation in transformed cells. In Homo sapiens (Human), this protein is Kelch-like protein 41 (KLHL41).